Reading from the N-terminus, the 313-residue chain is Epoxide hydrolase 1 (313 aa).

The 275-residue stretch at 25–299 (PAVLFLHGFP…AAHFINQEKA (275 aa)) folds into the AB hydrolase-1 domain. D100 functions as the Nucleophile in the catalytic mechanism. An an epoxide-binding site is contributed by Y149. The active-site Proton donor is the Y227. H292 (proton acceptor) is an active-site residue.

Belongs to the AB hydrolase superfamily. Epoxide hydrolase family. As to quaternary structure, homodimer. As to expression, highly expressed in fruits 15 days after anthesis (15-DAA).

The enzyme catalyses an epoxide + H2O = an ethanediol. It carries out the reaction (24S)-24,25-epoxycucurbitadienol + H2O = (24R)-24,25-dihydroxycucurbitadienol. It functions in the pathway secondary metabolite biosynthesis; terpenoid biosynthesis. Epoxide hydrolase involved in the biosynthesis of cucurbitacin and mogroside tetracyclic triterpene natural products (e.g. siamenoside I and mogrosides IV, V and VI). Cucurbitacins have cytotoxic properties and exhibit deterrent taste as a defense barrier against herbivores. Mogrosides are nonsugar highly oxygenated compounds used as high-intensity zero-calorie sweeteners; they also possess pharmacological properties such as regulating immunity, lowering blood sugar and lipid levels, protecting the liver, and acting as antioxidants and antitumor agents. Catalyzes the hydrolysis of aromatic epoxide-containing substrates, such as the conversion of 24,25-epoxycucurbitadienol to 24,25-dihydroxycucurbitadienol. The polypeptide is Epoxide hydrolase 1 (Siraitia grosvenorii (Monk's fruit)).